We begin with the raw amino-acid sequence, 1295 residues long: Nonribosomal peptide synthetase resC (1295 aa).

The tract at residues 1–24 (MDLTTTSHARVDSGGVPFTSSLND) is disordered. Positions 221–624 (KDVVDASPQA…EGRKDTQIKL (404 aa)) are adenylation. Positions 759–836 (ESANPAEENL…DQANLLRPLV (78 aa)) constitute a Carrier domain. Ser-796 carries the post-translational modification O-(pantetheine 4'-phosphoryl)serine. Residues 873-1284 (EDVYPCTPYQ…DEYSQTLHEL (412 aa)) form a condensation region.

This sequence belongs to the NRP synthetase family. Pantetheine 4'-phosphate is required as a cofactor.

The enzyme catalyses restrictinol + glycine + H(+) = restricticin + H2O. Its pathway is antifungal biosynthesis. In terms of biological role, nonribosomal peptide synthetase; part of the gene cluster that mediates the biosynthesis of the tetrahydropyranyl antifungal agent restricticin that acts as an inhibitor of CYP51 and blocks the ergosterol biosynthesis. Within the pathway, resC catalyzes the C3 esterification of restrictinol with glycine to yield restricticin. ResC represents an example of the emerging class of single-module NRPS-like enzymes that perform esterification reactions. The highly reducing polyketide synthase resH, the short chain dehydrogenase resG, the cyclase resF, the FAD-dependent monooxygenase resA and the enoylreductase resD are required to generate the first stable intermediate desmethylrestrictinol. ResH with resD biosynthesize the first polyketide chain intermediate that is reduced by resG, followed by epoxidation by resA before 6-endo cyclization via epoxide opening by resF leads to desmethylrestrictinol. The methyltransferase resE then catalyzes the C4 O-methylation of desmethylrestrictinol to produce restrictinol, and the nonribosomal peptide synthetase resC catalyzes the C3 esterification of restrictinol with glycine that leads to restricticin. This Aspergillus sclerotiorum protein is Nonribosomal peptide synthetase resC.